A 125-amino-acid polypeptide reads, in one-letter code: Glycine cleavage system H protein (125 aa).

Residues 22-104 (VATVGITIHA…EGEGWLFKLK (83 aa)) enclose the Lipoyl-binding domain. Lysine 63 is modified (N6-lipoyllysine).

The protein belongs to the GcvH family. The glycine cleavage system is composed of four proteins: P, T, L and H. The cofactor is (R)-lipoate.

In terms of biological role, the glycine cleavage system catalyzes the degradation of glycine. The H protein shuttles the methylamine group of glycine from the P protein to the T protein. This Brucella abortus (strain 2308) protein is Glycine cleavage system H protein.